Reading from the N-terminus, the 264-residue chain is tRNA pseudouridine synthase A (264 aa).

The Nucleophile role is filled by D51. Y109 contributes to the substrate binding site.

This sequence belongs to the tRNA pseudouridine synthase TruA family. As to quaternary structure, homodimer.

The enzyme catalyses uridine(38/39/40) in tRNA = pseudouridine(38/39/40) in tRNA. Formation of pseudouridine at positions 38, 39 and 40 in the anticodon stem and loop of transfer RNAs. This Vibrio campbellii (strain ATCC BAA-1116) protein is tRNA pseudouridine synthase A.